We begin with the raw amino-acid sequence, 153 residues long: Nucleoside diphosphate kinase (153 aa).

ATP contacts are provided by lysine 11, phenylalanine 59, arginine 87, threonine 93, arginine 104, and asparagine 114. Histidine 117 functions as the Pros-phosphohistidine intermediate in the catalytic mechanism.

This sequence belongs to the NDK family. As to quaternary structure, homotrimer. Requires Mg(2+) as cofactor.

It catalyses the reaction a 2'-deoxyribonucleoside 5'-diphosphate + ATP = a 2'-deoxyribonucleoside 5'-triphosphate + ADP. The catalysed reaction is a ribonucleoside 5'-diphosphate + ATP = a ribonucleoside 5'-triphosphate + ADP. In terms of biological role, major role in the synthesis of nucleoside triphosphates other than ATP. The ATP gamma phosphate is transferred to the NDP beta phosphate via a ping-pong mechanism, using a phosphorylated active-site intermediate. In Aspergillus fumigatus (strain ATCC MYA-4609 / CBS 101355 / FGSC A1100 / Af293) (Neosartorya fumigata), this protein is Nucleoside diphosphate kinase (ndk1).